The following is a 361-amino-acid chain: Phosphate acyltransferase (361 aa).

The segment at 342–361 (ADGAAAEQGPTPRRTAPRQT) is disordered.

It belongs to the PlsX family. In terms of assembly, homodimer. Probably interacts with PlsY.

The protein localises to the cytoplasm. The catalysed reaction is a fatty acyl-[ACP] + phosphate = an acyl phosphate + holo-[ACP]. It participates in lipid metabolism; phospholipid metabolism. In terms of biological role, catalyzes the reversible formation of acyl-phosphate (acyl-PO(4)) from acyl-[acyl-carrier-protein] (acyl-ACP). This enzyme utilizes acyl-ACP as fatty acyl donor, but not acyl-CoA. This is Phosphate acyltransferase from Anaeromyxobacter sp. (strain K).